Consider the following 373-residue polypeptide: Putative F-box/kelch-repeat protein At3g19410 (373 aa).

One can recognise an F-box domain in the interval 1–46 (MTIPELPKDLIEEILCYVPATYLKRLRSTCKGWNRLFKDDRRFAKK). Kelch repeat units follow at residues 101 to 148 (RIFH…FVLG), 149 to 200 (YYQE…QCVS), and 329 to 373 (KLYI…EEKS).

This is Putative F-box/kelch-repeat protein At3g19410 from Arabidopsis thaliana (Mouse-ear cress).